Consider the following 909-residue polypeptide: Nitrate reductase [NADH] (909 aa).

Cys187 is a binding site for Mo-molybdopterin. A Cytochrome b5 heme-binding domain is found at 535-610 (SKMYSMSEVK…LEDFRIGELI (76 aa)). Residues His570 and His593 each contribute to the heme site. In terms of domain architecture, FAD-binding FR-type spans 652 to 764 (REKIPCKLVD…KGPLGHIEYQ (113 aa)). Residues 704 to 707 (RAYT), 721 to 725 (VVKIY), Phe726, Phe733, 738 to 740 (QMS), and Thr791 contribute to the FAD site.

It belongs to the nitrate reductase family. Homodimer. Requires FAD as cofactor. Heme is required as a cofactor. The cofactor is Mo-molybdopterin.

The catalysed reaction is nitrite + NAD(+) + H2O = nitrate + NADH + H(+). Regulated by the nitrogen source and controlled by the circadian rhythm. Functionally, nitrate reductase is a key enzyme involved in the first step of nitrate assimilation in plants, fungi and bacteria. This Petunia hybrida (Petunia) protein is Nitrate reductase [NADH] (NIA).